Consider the following 367-residue polypeptide: Spermidine/putrescine import ATP-binding protein PotA (367 aa).

Residues 10 to 240 form the ABC transporter domain; the sequence is IEFKNVSLDY…PINHFVANFI (231 aa). 42 to 49 is an ATP binding site; the sequence is GPSGSGKS.

This sequence belongs to the ABC transporter superfamily. Spermidine/putrescine importer (TC 3.A.1.11.1) family. As to quaternary structure, the complex is composed of two ATP-binding proteins (PotA), two transmembrane proteins (PotB and PotC) and a solute-binding protein (PotD).

The protein localises to the cell membrane. It carries out the reaction ATP + H2O + polyamine-[polyamine-binding protein]Side 1 = ADP + phosphate + polyamineSide 2 + [polyamine-binding protein]Side 1.. Its function is as follows. Part of the ABC transporter complex PotABCD involved in spermidine/putrescine import. Responsible for energy coupling to the transport system. This Oenococcus oeni (strain ATCC BAA-331 / PSU-1) protein is Spermidine/putrescine import ATP-binding protein PotA.